Reading from the N-terminus, the 540-residue chain is BTB/POZ domain-containing protein 6-A (540 aa).

A BTB domain is found at 138–208; sequence ADVHFIVGPP…MYSDEIELAP (71 aa).

As to quaternary structure, interacts with cul3. Interacts (via BTB domain) with zbtb16/plzf. As to expression, expressed in the developing central nervous system.

It localises to the cytoplasm. The protein localises to the nucleus. Functionally, adapter protein for the cul3 E3 ubiquitin-protein ligase complex. Promotes the export of zbtb16/plzf from the nucleus to the cytoplasm and targets zbtb16/plzf for ubiquitination and degradation. Up-regulates neurog1 expression and antagonizes zbtb16/plzf, to promote neurogenesis. This Danio rerio (Zebrafish) protein is BTB/POZ domain-containing protein 6-A (btbd6a).